We begin with the raw amino-acid sequence, 226 residues long: ATP synthase F(0) complex subunit a (226 aa).

Transmembrane regions (helical) follow at residues 6–26 (FAPF…IITF), 68–88 (WTLM…LGLL), 97–117 (QLSM…IMGF), 138–158 (IPML…ALAV), 164–184 (ITAG…LSSI), and 195–215 (ILFL…YVFT).

This sequence belongs to the ATPase A chain family. Component of the ATP synthase complex composed at least of ATP5F1A/subunit alpha, ATP5F1B/subunit beta, ATP5MC1/subunit c (homooctomer), MT-ATP6/subunit a, MT-ATP8/subunit 8, ATP5ME/subunit e, ATP5MF/subunit f, ATP5MG/subunit g, ATP5MK/subunit k, ATP5MJ/subunit j, ATP5F1C/subunit gamma, ATP5F1D/subunit delta, ATP5F1E/subunit epsilon, ATP5PF/subunit F6, ATP5PB/subunit b, ATP5PD/subunit d, ATP5PO/subunit OSCP. ATP synthase complex consists of a soluble F(1) head domain (subunits alpha(3) and beta(3)) - the catalytic core - and a membrane F(0) domain - the membrane proton channel (subunits c, a, 8, e, f, g, k and j). These two domains are linked by a central stalk (subunits gamma, delta, and epsilon) rotating inside the F1 region and a stationary peripheral stalk (subunits F6, b, d, and OSCP). Interacts with DNAJC30; interaction is direct.

It is found in the mitochondrion inner membrane. It carries out the reaction H(+)(in) = H(+)(out). Functionally, subunit a, of the mitochondrial membrane ATP synthase complex (F(1)F(0) ATP synthase or Complex V) that produces ATP from ADP in the presence of a proton gradient across the membrane which is generated by electron transport complexes of the respiratory chain. ATP synthase complex consist of a soluble F(1) head domain - the catalytic core - and a membrane F(1) domain - the membrane proton channel. These two domains are linked by a central stalk rotating inside the F(1) region and a stationary peripheral stalk. During catalysis, ATP synthesis in the catalytic domain of F(1) is coupled via a rotary mechanism of the central stalk subunits to proton translocation. With the subunit c (ATP5MC1), forms the proton-conducting channel in the F(0) domain, that contains two crucial half-channels (inlet and outlet) that facilitate proton movement from the mitochondrial intermembrane space (IMS) into the matrix. Protons are taken up via the inlet half-channel and released through the outlet half-channel, following a Grotthuss mechanism. This chain is ATP synthase F(0) complex subunit a, found in Didelphis virginiana (North American opossum).